The primary structure comprises 121 residues: Large ribosomal subunit protein bL19 (121 aa).

It belongs to the bacterial ribosomal protein bL19 family.

Functionally, this protein is located at the 30S-50S ribosomal subunit interface and may play a role in the structure and function of the aminoacyl-tRNA binding site. This chain is Large ribosomal subunit protein bL19, found in Gloeobacter violaceus (strain ATCC 29082 / PCC 7421).